The primary structure comprises 158 residues: MRRMIIAKLHNVTGIMNRFTAVLNRRQVNILSITAGVTESQDLTHTTFVIEVDHLDEVEQIIKQLNRLIDVIEVADITDLPHVEREVVLIKVSAPPTIRAEIFTMIEPFRVNVVDVNLENVTIQLTGDSAKIEALIDVVSPYGILNMARTGSAGFERG.

Positions Met-4–Asp-79 constitute an ACT domain.

The protein belongs to the acetolactate synthase small subunit family. In terms of assembly, dimer of large and small chains.

It catalyses the reaction 2 pyruvate + H(+) = (2S)-2-acetolactate + CO2. It participates in amino-acid biosynthesis; L-isoleucine biosynthesis; L-isoleucine from 2-oxobutanoate: step 1/4. The protein operates within amino-acid biosynthesis; L-valine biosynthesis; L-valine from pyruvate: step 1/4. The chain is Acetolactate synthase small subunit (ilvH) from Lactococcus lactis subsp. lactis (strain IL1403) (Streptococcus lactis).